The sequence spans 296 residues: MVRVLSAGHVNWDVTLRVDRLPEADGEASIRSQRQSGGGSAANVAAALAGLEVDAGLIGSVGDDDNGVLARRDLESAGVDLEGVRIVEAGQTAVKYLLVDDDGEVAVLGNDGVNEAVGPEEIDERRIRNADHVHLTSQRPDTAAAIARTANEAGVTVSFDPGRRLGDRDYGEALAAADVLFANDRELAALLEDEYEYVGSDFDDRIVAVKHGSDGAEVHTPTGSYVHPGFDVDAVDTAGAGDAFAAGFIATWLTDGDVERALEYANACGALTAGREGARSAPTADAVAAFLSERFD.

Asp-242 (proton acceptor) is an active-site residue.

This sequence belongs to the carbohydrate kinase PfkB family. The cofactor is Mg(2+).

It carries out the reaction alpha-D-ribose 1-phosphate + ATP = alpha-D-ribose 1,5-bisphosphate + ADP + H(+). Requires salt for kinase activity. 2.0 M is the optimal KCl concentration. Functionally, kinase involved in the non-carboxylating pentose bisphosphate pathway, a nucleoside degradation pathway present in some halophilic archaea. Catalyzes the ATP-dependent phosphorylation of ribose 1-phosphate (R1P) to ribose 1,5-bisphosphate (R15P). Shows weak activity towards various other phosphate acceptors, such as xylulose, 2'-deoxyguanosine and D-ribulose. ATP is the most preferred phosphate donor, followed by CTP and GTP. The protein is ATP-dependent ribose-1-phosphate kinase of Halopiger xanaduensis (strain DSM 18323 / JCM 14033 / SH-6).